The following is a 190-amino-acid chain: UPF0301 protein Pfl01_5311 (190 aa).

It belongs to the UPF0301 (AlgH) family.

The polypeptide is UPF0301 protein Pfl01_5311 (Pseudomonas fluorescens (strain Pf0-1)).